Reading from the N-terminus, the 227-residue chain is ATP synthase F(0) complex subunit a (227 aa).

The next 6 helical transmembrane spans lie at 12–32 (PTYL…ILFP), 69–89 (WAVL…LGLL), 98–118 (QLSL…IIGM), 132–152 (EGTP…SLFI), 180–200 (FVLM…LFLL), and 202–222 (LLEI…LSLY).

It belongs to the ATPase A chain family. In terms of assembly, component of the ATP synthase complex composed at least of ATP5F1A/subunit alpha, ATP5F1B/subunit beta, ATP5MC1/subunit c (homooctomer), MT-ATP6/subunit a, MT-ATP8/subunit 8, ATP5ME/subunit e, ATP5MF/subunit f, ATP5MG/subunit g, ATP5MK/subunit k, ATP5MJ/subunit j, ATP5F1C/subunit gamma, ATP5F1D/subunit delta, ATP5F1E/subunit epsilon, ATP5PF/subunit F6, ATP5PB/subunit b, ATP5PD/subunit d, ATP5PO/subunit OSCP. ATP synthase complex consists of a soluble F(1) head domain (subunits alpha(3) and beta(3)) - the catalytic core - and a membrane F(0) domain - the membrane proton channel (subunits c, a, 8, e, f, g, k and j). These two domains are linked by a central stalk (subunits gamma, delta, and epsilon) rotating inside the F1 region and a stationary peripheral stalk (subunits F6, b, d, and OSCP). Interacts with DNAJC30; interaction is direct.

The protein localises to the mitochondrion inner membrane. The enzyme catalyses H(+)(in) = H(+)(out). Its function is as follows. Subunit a, of the mitochondrial membrane ATP synthase complex (F(1)F(0) ATP synthase or Complex V) that produces ATP from ADP in the presence of a proton gradient across the membrane which is generated by electron transport complexes of the respiratory chain. ATP synthase complex consist of a soluble F(1) head domain - the catalytic core - and a membrane F(1) domain - the membrane proton channel. These two domains are linked by a central stalk rotating inside the F(1) region and a stationary peripheral stalk. During catalysis, ATP synthesis in the catalytic domain of F(1) is coupled via a rotary mechanism of the central stalk subunits to proton translocation. With the subunit c (ATP5MC1), forms the proton-conducting channel in the F(0) domain, that contains two crucial half-channels (inlet and outlet) that facilitate proton movement from the mitochondrial intermembrane space (IMS) into the matrix. Protons are taken up via the inlet half-channel and released through the outlet half-channel, following a Grotthuss mechanism. The protein is ATP synthase F(0) complex subunit a of Salmo salar (Atlantic salmon).